A 179-amino-acid polypeptide reads, in one-letter code: UPF0303 protein YBR137W (179 aa).

It belongs to the UPF0303 family.

It is found in the cytoplasm. In Saccharomyces cerevisiae (strain ATCC 204508 / S288c) (Baker's yeast), this protein is UPF0303 protein YBR137W.